The chain runs to 64 residues: Large ribosomal subunit protein bL35 (64 aa).

The protein belongs to the bacterial ribosomal protein bL35 family.

This is Large ribosomal subunit protein bL35 from Shewanella halifaxensis (strain HAW-EB4).